The chain runs to 341 residues: GTP 3',8-cyclase (341 aa).

Positions 17 to 235 (TYGRVATDLR…LRTRFELTAE (219 aa)) constitute a Radical SAM core domain. Arg-26 is a binding site for GTP. Cys-33 and Cys-37 together coordinate [4Fe-4S] cluster. Tyr-39 serves as a coordination point for S-adenosyl-L-methionine. Cys-40 is a [4Fe-4S] cluster binding site. Arg-77 serves as a coordination point for GTP. Gly-81 serves as a coordination point for S-adenosyl-L-methionine. GTP is bound at residue Thr-108. S-adenosyl-L-methionine is bound at residue Ser-132. Position 169 (Lys-169) interacts with GTP. Met-203 is a binding site for S-adenosyl-L-methionine. The [4Fe-4S] cluster site is built by Cys-268 and Cys-271. 273–275 (RTR) contributes to the GTP binding site. [4Fe-4S] cluster is bound at residue Cys-285.

It belongs to the radical SAM superfamily. MoaA family. As to quaternary structure, monomer and homodimer. It depends on [4Fe-4S] cluster as a cofactor.

It catalyses the reaction GTP + AH2 + S-adenosyl-L-methionine = (8S)-3',8-cyclo-7,8-dihydroguanosine 5'-triphosphate + 5'-deoxyadenosine + L-methionine + A + H(+). The protein operates within cofactor biosynthesis; molybdopterin biosynthesis. In terms of biological role, catalyzes the cyclization of GTP to (8S)-3',8-cyclo-7,8-dihydroguanosine 5'-triphosphate. The polypeptide is GTP 3',8-cyclase (Streptomyces coelicolor (strain ATCC BAA-471 / A3(2) / M145)).